We begin with the raw amino-acid sequence, 190 residues long: GTP cyclohydrolase 1 (190 aa).

3 residues coordinate Zn(2+): C75, H78, and C146.

This sequence belongs to the GTP cyclohydrolase I family. In terms of assembly, homomer.

It carries out the reaction GTP + H2O = 7,8-dihydroneopterin 3'-triphosphate + formate + H(+). The protein operates within cofactor biosynthesis; 7,8-dihydroneopterin triphosphate biosynthesis; 7,8-dihydroneopterin triphosphate from GTP: step 1/1. The polypeptide is GTP cyclohydrolase 1 (Campylobacter concisus (strain 13826)).